A 358-amino-acid polypeptide reads, in one-letter code: Membrane-bound lytic murein transglycosylase C (358 aa).

A signal peptide spans 1 to 16 (MKKILALLVIAPLLIS). Cys-17 carries the N-palmitoyl cysteine lipid modification. Cys-17 carries S-diacylglycerol cysteine lipidation.

Belongs to the transglycosylase Slt family.

Its subcellular location is the cell outer membrane. It carries out the reaction Exolytic cleavage of the (1-&gt;4)-beta-glycosidic linkage between N-acetylmuramic acid (MurNAc) and N-acetylglucosamine (GlcNAc) residues in peptidoglycan, from either the reducing or the non-reducing ends of the peptidoglycan chains, with concomitant formation of a 1,6-anhydrobond in the MurNAc residue.. Murein-degrading enzyme. May play a role in recycling of muropeptides during cell elongation and/or cell division. This is Membrane-bound lytic murein transglycosylase C from Serratia proteamaculans (strain 568).